Consider the following 393-residue polypeptide: Methylthioribose kinase (393 aa).

Residues Asn38, Lys53, and 107–109 contribute to the ATP site; that span reads EDL. Substrate is bound at residue Asp225. Residue 242-244 coordinates ATP; sequence DPE. Arg332 provides a ligand contact to substrate.

Belongs to the methylthioribose kinase family. Homodimer.

The enzyme catalyses 5-(methylsulfanyl)-D-ribose + ATP = 5-(methylsulfanyl)-alpha-D-ribose 1-phosphate + ADP + H(+). Its pathway is amino-acid biosynthesis; L-methionine biosynthesis via salvage pathway; S-methyl-5-thio-alpha-D-ribose 1-phosphate from S-methyl-5'-thioadenosine (hydrolase route): step 2/2. In terms of biological role, catalyzes the phosphorylation of methylthioribose into methylthioribose-1-phosphate. This Bacillus cereus (strain G9842) protein is Methylthioribose kinase.